A 125-amino-acid chain; its full sequence is Small ribosomal subunit protein uS12 (125 aa).

The segment at 9–31 is disordered; sequence RQGREVEKIKSKSPAMENSPQRR. Asp-89 bears the 3-methylthioaspartic acid mark.

This sequence belongs to the universal ribosomal protein uS12 family. As to quaternary structure, part of the 30S ribosomal subunit. Contacts proteins S8 and S17. May interact with IF1 in the 30S initiation complex.

In terms of biological role, with S4 and S5 plays an important role in translational accuracy. Functionally, interacts with and stabilizes bases of the 16S rRNA that are involved in tRNA selection in the A site and with the mRNA backbone. Located at the interface of the 30S and 50S subunits, it traverses the body of the 30S subunit contacting proteins on the other side and probably holding the rRNA structure together. The combined cluster of proteins S8, S12 and S17 appears to hold together the shoulder and platform of the 30S subunit. This chain is Small ribosomal subunit protein uS12, found in Verminephrobacter eiseniae (strain EF01-2).